The chain runs to 482 residues: ATP synthase subunit beta (482 aa).

168 to 175 lines the ATP pocket; sequence GGAGVGKT.

This sequence belongs to the ATPase alpha/beta chains family. As to quaternary structure, F-type ATPases have 2 components, CF(1) - the catalytic core - and CF(0) - the membrane proton channel. CF(1) has five subunits: alpha(3), beta(3), gamma(1), delta(1), epsilon(1). CF(0) has three main subunits: a(1), b(2) and c(9-12). The alpha and beta chains form an alternating ring which encloses part of the gamma chain. CF(1) is attached to CF(0) by a central stalk formed by the gamma and epsilon chains, while a peripheral stalk is formed by the delta and b chains.

It is found in the cell membrane. The enzyme catalyses ATP + H2O + 4 H(+)(in) = ADP + phosphate + 5 H(+)(out). Produces ATP from ADP in the presence of a proton gradient across the membrane. The catalytic sites are hosted primarily by the beta subunits. The chain is ATP synthase subunit beta from Corynebacterium urealyticum (strain ATCC 43042 / DSM 7109).